Reading from the N-terminus, the 466-residue chain is Ribulose bisphosphate carboxylase large chain (466 aa).

Lysine 5 is modified (N6,N6,N6-trimethyllysine). Positions 114 and 164 each coordinate substrate. Residue lysine 166 is the Proton acceptor of the active site. A substrate-binding site is contributed by lysine 168. The Mg(2+) site is built by lysine 192, aspartate 194, and glutamate 195. Lysine 192 is subject to N6-carboxylysine. Histidine 285 serves as the catalytic Proton acceptor. Positions 286, 318, and 370 each coordinate substrate.

This sequence belongs to the RuBisCO large chain family. Type I subfamily. Heterohexadecamer of 8 large chains and 8 small chains; disulfide-linked. The disulfide link is formed within the large subunit homodimers. Mg(2+) serves as cofactor. The disulfide bond which can form in the large chain dimeric partners within the hexadecamer appears to be associated with oxidative stress and protein turnover.

The protein resides in the plastid. It localises to the chloroplast. It carries out the reaction 2 (2R)-3-phosphoglycerate + 2 H(+) = D-ribulose 1,5-bisphosphate + CO2 + H2O. The enzyme catalyses D-ribulose 1,5-bisphosphate + O2 = 2-phosphoglycolate + (2R)-3-phosphoglycerate + 2 H(+). RuBisCO catalyzes two reactions: the carboxylation of D-ribulose 1,5-bisphosphate, the primary event in carbon dioxide fixation, as well as the oxidative fragmentation of the pentose substrate in the photorespiration process. Both reactions occur simultaneously and in competition at the same active site. The polypeptide is Ribulose bisphosphate carboxylase large chain (Drosera capensis (Cape sundew)).